The chain runs to 310 residues: Nodulation protein D 2 (310 aa).

Residues Leu6–Thr63 enclose the HTH lysR-type domain. Residues Leu23–Ala42 constitute a DNA-binding region (H-T-H motif).

The protein belongs to the LysR transcriptional regulatory family.

Functionally, nodD regulates the expression of the nodABCFE genes which encode other nodulation proteins. NodD is also a negative regulator of its own expression. Binds flavonoids as inducers. The chain is Nodulation protein D 2 (nodD2) from Rhizobium meliloti (strain 1021) (Ensifer meliloti).